We begin with the raw amino-acid sequence, 1701 residues long: DDB1- and CUL4-associated factor homolog 1 (1701 aa).

A compositionally biased stretch (polar residues) spans 224 to 245 (HAEQSTSNGTSIPSIKITSVDG). Disordered regions lie at residues 224–269 (HAEQ…RRTE), 883–906 (DRPASRSINTPILNKPLPSSGNNF), and 932–961 (RPSNAASLSSPAMATRSHSTDDDVFATPTL). In terms of domain architecture, LisH spans 851-883 (NQAELLQLIHDHLLKSKLDSVAAMLKSEAKLPD). Over residues 888–906 (RSINTPILNKPLPSSGNNF) the composition is skewed to polar residues. WD repeat units follow at residues 1086 to 1125 (DHDESYTKATFSVDDEHLIVGLFNGEVHWINVDTGLDEGH), 1128 to 1169 (CHGS…QRVH), 1171 to 1210 (YREDSCVKFANTTMQRIVGTCRDKATVYDTETNHVLDTYL), and 1215 to 1252 (GLQYEKNYASFSPDDKLIFNDGLLWDVRKKNSAIHVFD). 2 consecutive short sequence motifs (DWD box) follow at residues 1237–1245 (LLWDVRKKN) and 1275–1282 (EVYDIRTF). Disordered regions lie at residues 1384 to 1559 (IGRL…DINL), 1566 to 1585 (EARVVENEGNNERPARPVDP), and 1641 to 1701 (LVRG…DDEA). Acidic residues-rich tracts occupy residues 1390 to 1423 (NEDENDEEEDEQREDHDEDEDSDESGDGDDDEEI) and 1451 to 1461 (DDNDTLDDLDF). Positions 1468 to 1479 (IIRRQAQRRRQR) are enriched in basic residues. Acidic residues-rich tracts occupy residues 1494–1512 (EGSDEDGDDDEDGEGDPDF) and 1520–1543 (DLVDAVDEEVDEDELGTDGDDDDS). Positions 1567–1581 (ARVVENEGNNERPAR) are enriched in basic and acidic residues. Residues 1667 to 1678 (DTDEYQSEEEEI) are compositionally biased toward acidic residues.

This sequence belongs to the VPRBP/DCAF1 family. As to quaternary structure, component of the cul4-rbx1-ddb1-dcaf1 E3 ubiquitin-protein ligase complex.

It is found in the nucleus. It functions in the pathway protein modification; protein ubiquitination. Component of the cul4-rbx1-ddb1-dcaf1 E3 ubiquitin-protein ligase complex, dcaf1 may function as the substrate recognition module within this complex. The polypeptide is DDB1- and CUL4-associated factor homolog 1 (dcaf-1) (Caenorhabditis elegans).